The following is a 466-amino-acid chain: Cysteine--tRNA ligase (466 aa).

Cys28 lines the Zn(2+) pocket. The 'HIGH' region motif lies at Pro30–Asn40. Residues Cys208, His233, and Glu237 each contribute to the Zn(2+) site. The 'KMSKS' region motif lies at Lys265–Ser269. Lys268 lines the ATP pocket.

This sequence belongs to the class-I aminoacyl-tRNA synthetase family. In terms of assembly, monomer. The cofactor is Zn(2+).

Its subcellular location is the cytoplasm. It catalyses the reaction tRNA(Cys) + L-cysteine + ATP = L-cysteinyl-tRNA(Cys) + AMP + diphosphate. This Staphylococcus epidermidis (strain ATCC 35984 / DSM 28319 / BCRC 17069 / CCUG 31568 / BM 3577 / RP62A) protein is Cysteine--tRNA ligase.